The following is a 321-amino-acid chain: uncharacterized protein (321 aa).

The protein belongs to the NAD(P)-dependent epimerase/dehydratase family.

This is an uncharacterized protein from Staphylococcus aureus (strain COL).